Consider the following 491-residue polypeptide: Chromosomal replication initiator protein DnaA (491 aa).

The domain I, interacts with DnaA modulators stretch occupies residues 1-68 (MTSIWGQIQH…RTAACGVIGD (68 aa)). The domain II stretch occupies residues 68 to 146 (DTVEVVVTAG…PLDWAPVPQS (79 aa)). Positions 147 to 364 (RTNWRFSFDD…SCLHNLILKA (218 aa)) are domain III, AAA+ region. G190, G192, K193, and T194 together coordinate ATP. The tract at residues 365–491 (KLLNRQISLE…RNGRITHARH (127 aa)) is domain IV, binds dsDNA.

It belongs to the DnaA family. Oligomerizes as a right-handed, spiral filament on DNA at oriC.

The protein localises to the cytoplasm. In terms of biological role, plays an essential role in the initiation and regulation of chromosomal replication. ATP-DnaA binds to the origin of replication (oriC) to initiate formation of the DNA replication initiation complex once per cell cycle. Binds the DnaA box (a 9 base pair repeat at the origin) and separates the double-stranded (ds)DNA. Forms a right-handed helical filament on oriC DNA; dsDNA binds to the exterior of the filament while single-stranded (ss)DNA is stabiized in the filament's interior. The ATP-DnaA-oriC complex binds and stabilizes one strand of the AT-rich DNA unwinding element (DUE), permitting loading of DNA polymerase. After initiation quickly degrades to an ADP-DnaA complex that is not apt for DNA replication. Binds acidic phospholipids. The sequence is that of Chromosomal replication initiator protein DnaA from Nitratidesulfovibrio vulgaris (strain ATCC 29579 / DSM 644 / CCUG 34227 / NCIMB 8303 / VKM B-1760 / Hildenborough) (Desulfovibrio vulgaris).